Reading from the N-terminus, the 572-residue chain is Glypican-5 (572 aa).

The signal sequence occupies residues 1 to 24 (MDARTWRLGWRCLLLLALLGSTRS). 2 N-linked (GlcNAc...) asparagine glycosylation sites follow: N120 and N237. A glycan (O-linked (Xyl...) (glycosaminoglycan) serine) is linked at S486. N493 carries N-linked (GlcNAc...) asparagine glycosylation. S495, S507, and S509 each carry an O-linked (Xyl...) (glycosaminoglycan) serine glycan. A glycan (N-linked (GlcNAc...) asparagine) is linked at N527.

This sequence belongs to the glypican family.

It localises to the cell membrane. The protein localises to the secreted. The protein resides in the extracellular space. Cell surface proteoglycan that bears heparan sulfate. The sequence is that of Glypican-5 (Gpc5) from Mus musculus (Mouse).